A 909-amino-acid chain; its full sequence is Golgin subfamily A member 6-like protein 2 (909 aa).

The span at 1–11 (MWPQPHLPPHP) shows a compositional bias: pro residues. 5 disordered regions span residues 1–88 (MWPQ…ASHQ), 300–362 (ERLR…EQEE), 381–408 (QEKQMREQEQKMRDQEERMWEQDERLRE), 425–494 (KMRE…QRLP), and 524–909 (EEMW…QSSL). Positions 13–31 (MSEKTRQNKLAEAKKKFTD) are enriched in basic and acidic residues. Positions 53–77 (NNGTNPETTTSEGCHSPEDTQQNRA) are enriched in polar residues. Positions 78–88 (QLKEEKKASHQ) are enriched in basic and acidic residues. Residues 192–526 (HKKADRYIEE…EEKIRDQEEM (335 aa)) adopt a coiled-coil conformation. Basic and acidic residues-rich tracts occupy residues 425 to 478 (KMRE…KQEE) and 524 to 542 (EEMWGQEKKMWRQEKMREQ). Acidic residues predominate over residues 607-620 (AGGEEDAGAGEEDM). 2 stretches are compositionally biased toward gly residues: residues 641 to 654 (GGGGDDAGAGGEDA) and 676 to 689 (GAGGEDVGAGGEDV). The span at 692–719 (GRRRCGSSRGCRNRRRSCGNTRRCRSRR) shows a compositional bias: basic residues. Over residues 746-755 (AGAEDVAAGG) the composition is skewed to low complexity. Residues 757–766 (DAGEEEDAGG) show a composition bias toward acidic residues. Gly residues predominate over residues 791-871 (GAGGEDVGAG…AGGEDVGAGG (81 aa)). Over residues 872-892 (DAREGGEDTRSEREDAGEAAR) the composition is skewed to basic and acidic residues.

Belongs to the GOLGA6 family.

The chain is Golgin subfamily A member 6-like protein 2 (GOLGA6L2) from Homo sapiens (Human).